Consider the following 193-residue polypeptide: Phosphatidylglycerophosphatase and protein-tyrosine phosphatase 1 (193 aa).

The transit peptide at 1–31 (MAASAWLEAGLARVLFYPTLLYTVFRGRVGG) directs the protein to the mitochondrion. The region spanning 37-188 (WYHRIDHTVL…LKEFHKEIAA (152 aa)) is the Tyrosine-protein phosphatase domain. N6-succinyllysine is present on Lys-85. Cys-132 acts as the Phosphocysteine intermediate in catalysis.

Belongs to the protein-tyrosine phosphatase family. Non-receptor class dual specificity subfamily. As to quaternary structure, interacts with STYXL1; the interaction inhibits PTPMT1 catalytic activity. As to expression, expressed in liver and in pancreatic beta cells.

Its subcellular location is the mitochondrion inner membrane. The catalysed reaction is O-phospho-L-tyrosyl-[protein] + H2O = L-tyrosyl-[protein] + phosphate. It carries out the reaction O-phospho-L-seryl-[protein] + H2O = L-seryl-[protein] + phosphate. The enzyme catalyses O-phospho-L-threonyl-[protein] + H2O = L-threonyl-[protein] + phosphate. It catalyses the reaction a 1,2-diacyl-sn-glycero-3-phospho-(1'-sn-glycero-3'-phosphate) + H2O = a 1,2-diacyl-sn-glycero-3-phospho-(1'-sn-glycerol) + phosphate. The catalysed reaction is 1,2-di-(9Z-octadecenoyl)-sn-glycero-3-phospho-(1'-sn-glycerol-3'-phosphate) + H2O = 1,2-di-(9Z-octadecenoyl)-sn-glycero-3-phospho-(1'-sn-glycerol) + phosphate. It carries out the reaction 1,2-dioctanoyl-sn-glycero-3-phospho-(1D-myo-inositol-5-phosphate) + H2O = 1,2-dioctanoyl-sn-glycero-3-phospho-(1D-myo-inositol) + phosphate. The enzyme catalyses a 1-acyl-2-hexanoyl-sn-glycero-3-phospho-(1D-myo-inositol-5-phosphate) + H2O = a 1-acyl-2-hexanoyl-sn-glycero-3-phospho-(1D-myo-inositol) + phosphate. It catalyses the reaction 1,2-dibutyryl-sn-glycero-3-phospho-(1D-myo-inositol-5-phosphate) + H2O = 1,2-dibutyryl-sn-glycero-3-phospho-(1D-myo-inositol) + phosphate. Its pathway is phospholipid metabolism; phosphatidylglycerol biosynthesis; phosphatidylglycerol from CDP-diacylglycerol: step 2/2. Functionally, lipid phosphatase which dephosphorylates phosphatidylglycerophosphate (PGP) to phosphatidylglycerol (PG). PGP is an essential intermediate in the biosynthetic pathway of cardiolipin, a mitochondrial-specific phospholipid regulating the membrane integrity and activities of the organelle. Has also been shown to display phosphatase activity toward phosphoprotein substrates, specifically mediates dephosphorylation of mitochondrial proteins, thereby playing an essential role in ATP production. Has probably a preference for proteins phosphorylated on Ser and/or Thr residues compared to proteins phosphorylated on Tyr residues. Probably involved in regulation of insulin secretion in pancreatic beta cells. May prevent intrinsic apoptosis, probably by regulating mitochondrial membrane integrity. The protein is Phosphatidylglycerophosphatase and protein-tyrosine phosphatase 1 of Rattus norvegicus (Rat).